The following is a 415-amino-acid chain: MSLQAPKGTKDLLPTESYKWQYLENKFRNIAADFGCREIRTPVFEYTELFQRGVGETTDVVQKEMYTFEDKAGRSITLKPEGTSPAVRAFVEGRLFNETQPTKMYYFTPVMRYENVQKGRLRQHHQFGIEIFGAKEASVDAEVISIPVRIYKELGVEGVELNINSIGCPKCRKTYNEALKKYLSKNYDKLCSTCKTRFDKNPLRILDCKVDTCKEIVKDAPIILDYICGECKEHFESLKNYLDVLNINYKIDPFIVRGLDYYSKTVFEFITDDITICAGGRYDYLIEEIGGPSMPAVGFGMGMERLLLTLQEKAIEIPEEAYVDLYLGNMGDKAKLEVLKLAKELRDRHIKCEIDHMGKSVKAQMKYANRIGAKYSMVLGEEELNTGKATIKKMEDGQQIEVDIKDIDTLIKVFK.

The protein belongs to the class-II aminoacyl-tRNA synthetase family. Homodimer.

Its subcellular location is the cytoplasm. It carries out the reaction tRNA(His) + L-histidine + ATP = L-histidyl-tRNA(His) + AMP + diphosphate + H(+). This is Histidine--tRNA ligase from Clostridium botulinum (strain 657 / Type Ba4).